The sequence spans 110 residues: MEARAIAKFVRIAPRKVKIVVDLVRGKQVDEALAILKHTPKGASPVVIKLIQSAVANAENNHEMDREQLFVSEVYANQGPTMKRFRPRAMGRATTIRKRTSHIGIVVKEK.

The protein belongs to the universal ribosomal protein uL22 family. Part of the 50S ribosomal subunit.

This protein binds specifically to 23S rRNA; its binding is stimulated by other ribosomal proteins, e.g. L4, L17, and L20. It is important during the early stages of 50S assembly. It makes multiple contacts with different domains of the 23S rRNA in the assembled 50S subunit and ribosome. Its function is as follows. The globular domain of the protein is located near the polypeptide exit tunnel on the outside of the subunit, while an extended beta-hairpin is found that lines the wall of the exit tunnel in the center of the 70S ribosome. This Alkaliphilus metalliredigens (strain QYMF) protein is Large ribosomal subunit protein uL22.